The sequence spans 194 residues: Endoribonuclease ToxN (194 aa).

Residues 114-182 (MLKQYLFLKE…DQAKERDKAR (69 aa)) adopt a coiled-coil conformation. A compositionally biased stretch (basic and acidic residues) spans 171–182 (ERDQAKERDKAR). Residues 171–194 (ERDQAKERDKARRIAYMRQMGRER) form a disordered region.

Belongs to the ToxN/AbiQ toxin family. In terms of assembly, one ToxN monomer binds to a 34-nt-long single repeat of the ToxI RNA; this complex forms a triangular heterohexameric complex with ToxN connected by the ToxI RNA to another toxin molecule. The ToxI repeats are cleavage products of their precursor. The ToxI repeat forms a pseudoknot which occludes the toxin active site.

Toxic component of a type III toxin-antitoxin (TA) system. An endoribonuclease which cleaves between the first and second A of AAAAA sequences; it tolerates other nucleotides in positions +2 and +4 of the consensus. Digests cognate antitoxin RNA ToxI as shown by the 2'-3'-cyclic phosphate at the 3' end of the 34-nt repeats and probably other RNAs. Inhibits growth when expressed in E.coli without causing cell lysis; this bacteriostatic effect is neutralized by cognate RNA antitoxin ToxI, which has 2.9 nearly identical 34 nucleotide-long repeats. Non-cognate antitoxin RNA from P.atrosepticum does not inhibit this toxin. The toxin-antitoxin pair function in plasmid maintenance (a plasmid addiction system), but unlike its P.atrosepticum homolog it is not seen to confer resistance to bacteriophages. The chain is Endoribonuclease ToxN from Bacillus thuringiensis subsp. kurstaki.